Consider the following 690-residue polypeptide: Cyclic nucleotide-gated channel alpha-1 (690 aa).

The Cytoplasmic segment spans residues 1–163 (MKKVIINTWH…VVIDPSGNTY (163 aa)). Disordered regions lie at residues 33-76 (GACS…PSQR) and 88-151 (NVNN…EEKK). Over residues 40–54 (GDDDDSASMFEESET) the composition is skewed to acidic residues. Positions 64–76 (RSNTHGSGQPSQR) are enriched in polar residues. Residues 111 to 151 (SKPDDKNENKKDPEKKKKKEKDKDKKKKEEKGKDKKEEEKK) are compositionally biased toward basic and acidic residues. A helical membrane pass occupies residues 164–185 (YNWLFCITLPVMYNWTMIIARA). Over 186–195 (CFDELQSDYL) the chain is Extracellular. A helical membrane pass occupies residues 196–215 (EYWLAFDYLSDVVYLLDMFV). Residues 216–241 (RTRTGYLEQGLLVKEERKLIDKYKST) lie on the Cytoplasmic side of the membrane. Residues 242–251 (FQFKLDVLSV) traverse the membrane as a helical segment. Topologically, residues 252 to 264 (IPTDLLYIKFGWN) are extracellular. A helical membrane pass occupies residues 265–283 (YPEIRLNRLLRISRMFEFF). Residues 284-291 (QRTETRTN) are Cytoplasmic-facing. The chain crosses the membrane as a helical span at residues 292-315 (YPNIFRISNLVMYIIIIIHWNACV). The ion conduction pathway stretch occupies residues 293 to 402 (PNIFRISNLV…NIGSMISNMN (110 aa)). Over 316 to 342 (YFSISKAIGFGNDTWVYPDVNDPDFGR) the chain is Extracellular. N-linked (GlcNAc...) asparagine glycosylation occurs at N327. The next 2 membrane-spanning stretches (helical) occupy residues 343–373 (LARK…DSEY) and 374–399 (FFVV…SMIS). Positions 360–363 (TIGE) are selectivity filter. Over 400–690 (NMNAARAEFQ…ESGPTDSTQD (291 aa)) the chain is Cytoplasmic. Residues 403–479 (AARAEFQARI…DTLKKVRIFA (77 aa)) are C-linker. A cyclic nucleotide-binding domain (CNBD) region spans residues 482–603 (EAGLLVELVL…EEKGKQILMK (122 aa)). 3',5'-cyclic GMP-binding residues include G543, S546, R559, and T560. R559 and T560 together coordinate 3',5'-cyclic AMP. A coiled-coil region spans residues 621–664 (LEEKVTRMESSVDLLQTRFARILAEYESMQQKLKQRLTKVEKFL).

This sequence belongs to the cyclic nucleotide-gated cation channel (TC 1.A.1.5) family. CNGA1 subfamily. In terms of assembly, forms a heterotetramer with CNGB1 in a 3:1 ratio. May also form cyclic nucleotide-activated homotetrameric channels, that are efficiently activated by saturating cGMP, but poorly activated by saturating cAMP compared to the heterotetramer with CNGB1. The channel binds Ca(2+)-bound CALM1 via CaM1 and CaM2 regions of the CNGB1 subunit; this interaction modulates the affinity of the channel for cNMPs in response to intracellular Ca(2+) levels. As to expression, expressed in the retina, in rod cells (at protein level).

Its subcellular location is the cell membrane. The enzyme catalyses Ca(2+)(in) = Ca(2+)(out). The catalysed reaction is Na(+)(in) = Na(+)(out). It carries out the reaction K(+)(in) = K(+)(out). It catalyses the reaction NH4(+)(in) = NH4(+)(out). The enzyme catalyses Rb(+)(in) = Rb(+)(out). The catalysed reaction is Li(+)(in) = Li(+)(out). It carries out the reaction Cs(+)(in) = Cs(+)(out). Functionally, pore-forming subunit of the rod cyclic nucleotide-gated channel. Mediates rod photoresponses at dim light converting transient changes in intracellular cGMP levels into electrical signals. In the dark, cGMP levels are high and keep the channel open enabling a steady inward current carried by Na(+) and Ca(2+) ions that leads to membrane depolarization and neurotransmitter release from synaptic terminals. Upon photon absorption cGMP levels decline leading to channel closure and membrane hyperpolarization that ultimately slows neurotransmitter release and signals the presence of light, the end point of the phototransduction cascade. Conducts cGMP- and cAMP-gated ion currents, with permeability for monovalent and divalent cations. The selectivity for Ca(2+) over Na(+) increases with cGMP concentrations, whereas the selectivity among monovalent ions is independent of the cGMP levels. In Bos taurus (Bovine), this protein is Cyclic nucleotide-gated channel alpha-1.